The primary structure comprises 78 residues: MNLDLDTNLIILIIYAALAGAYFLVMPAIVYAYLKTRWYVVSSIERVFMYFLMFLFFPGMLVLSPFLNFRPRKQQIES.

2 consecutive transmembrane segments (helical) span residues 10–30 (IILIIYAALAGAYFLVMPAIV) and 47–67 (VFMYFLMFLFFPGMLVLSPFL).

This sequence belongs to the complex I NdhL subunit family. As to quaternary structure, NDH-1 can be composed of about 15 different subunits; different subcomplexes with different compositions have been identified which probably have different functions.

The protein localises to the cellular thylakoid membrane. It carries out the reaction a plastoquinone + NADH + (n+1) H(+)(in) = a plastoquinol + NAD(+) + n H(+)(out). The enzyme catalyses a plastoquinone + NADPH + (n+1) H(+)(in) = a plastoquinol + NADP(+) + n H(+)(out). In terms of biological role, NDH-1 shuttles electrons from an unknown electron donor, via FMN and iron-sulfur (Fe-S) centers, to quinones in the respiratory and/or the photosynthetic chain. The immediate electron acceptor for the enzyme in this species is believed to be plastoquinone. Couples the redox reaction to proton translocation, and thus conserves the redox energy in a proton gradient. Cyanobacterial NDH-1 also plays a role in inorganic carbon-concentration. The sequence is that of NAD(P)H-quinone oxidoreductase subunit L from Trichodesmium erythraeum (strain IMS101).